Consider the following 142-residue polypeptide: 3-hydroxyacyl-[acyl-carrier-protein] dehydratase FabZ (142 aa).

His48 is a catalytic residue.

This sequence belongs to the thioester dehydratase family. FabZ subfamily.

The protein localises to the cytoplasm. The enzyme catalyses a (3R)-hydroxyacyl-[ACP] = a (2E)-enoyl-[ACP] + H2O. Functionally, involved in unsaturated fatty acids biosynthesis. Catalyzes the dehydration of short chain beta-hydroxyacyl-ACPs and long chain saturated and unsaturated beta-hydroxyacyl-ACPs. This is 3-hydroxyacyl-[acyl-carrier-protein] dehydratase FabZ from Desulforamulus reducens (strain ATCC BAA-1160 / DSM 100696 / MI-1) (Desulfotomaculum reducens).